Consider the following 156-residue polypeptide: Small ribosomal subunit protein uS7 (156 aa).

This sequence belongs to the universal ribosomal protein uS7 family. In terms of assembly, part of the 30S ribosomal subunit. Contacts proteins S9 and S11.

Functionally, one of the primary rRNA binding proteins, it binds directly to 16S rRNA where it nucleates assembly of the head domain of the 30S subunit. Is located at the subunit interface close to the decoding center, probably blocks exit of the E-site tRNA. This Bacillus cereus (strain ZK / E33L) protein is Small ribosomal subunit protein uS7.